The chain runs to 253 residues: Uridylate kinase (253 aa).

Position 26–29 (26–29) interacts with ATP; the sequence is KLSG. UMP is bound at residue Gly68. The ATP site is built by Gly69 and Arg73. Residues Asp88 and 149–156 each bind UMP; that span reads TGNPFFTT. ATP-binding residues include Thr176, Tyr182, and Asp185.

This sequence belongs to the UMP kinase family. Homohexamer.

The protein resides in the cytoplasm. The enzyme catalyses UMP + ATP = UDP + ADP. It functions in the pathway pyrimidine metabolism; CTP biosynthesis via de novo pathway; UDP from UMP (UMPK route): step 1/1. Inhibited by UTP. Its function is as follows. Catalyzes the reversible phosphorylation of UMP to UDP. The protein is Uridylate kinase of Chromohalobacter salexigens (strain ATCC BAA-138 / DSM 3043 / CIP 106854 / NCIMB 13768 / 1H11).